The sequence spans 264 residues: Ion-translocating oxidoreductase complex subunit B (264 aa).

A helical membrane pass occupies residues 5-25 (LINSIAVLAGLGFAVGVMLVI). In terms of domain architecture, 4Fe-4S spans 33–92 (DSNPLIDDVASLLPGANCGGCGFAGCAACAEAIVEQGAPVNSCPVGGFEVAKQIGALLGQ). [4Fe-4S] cluster is bound by residues Cys-50, Cys-53, Cys-58, Cys-75, Cys-138, Cys-142, Cys-148, Cys-152, Cys-172, Cys-175, Cys-178, Cys-182, Cys-217, Cys-220, Cys-223, Cys-227, Cys-246, Cys-249, Cys-252, and Cys-256. 4Fe-4S ferredoxin-type domains are found at residues 127-162 (VALMLCDSRKGCTYGCLGLGTCVQACQFGALSMGED), 163-192 (GFPVVNKALCTSCGNCIAACPNGVLTFARD), 207-236 (KDVKAVCEVGCIGCKKCEKECPAGAIRVTE), and 237-264 (FLAEIDQEKCTACGACVAICPQKAIELR).

The protein belongs to the 4Fe4S bacterial-type ferredoxin family. RnfB subfamily. As to quaternary structure, the Rnf complex is probably composed of eight subunits, including RnfA, RnfB, RnfC, RnfD, RnfE and RnfG. The cofactor is [4Fe-4S] cluster.

The protein resides in the cell membrane. Its function is as follows. Part of a membrane-bound complex that couples electron transfer with translocation of ions across the membrane. Catalyzes Na(+) transport, most probably coupled to electron transfer from reduced ferredoxin to methanophenazine and heterodisulfide reductase. Involved in heterodisulfide reduction during methanogenesis from acetate. The polypeptide is Ion-translocating oxidoreductase complex subunit B (Methanosarcina acetivorans (strain ATCC 35395 / DSM 2834 / JCM 12185 / C2A)).